Reading from the N-terminus, the 328-residue chain is Octanoyltransferase, mitochondrial (328 aa).

The BPL/LPL catalytic domain maps to 108–312; the sequence is MKPNPIILTF…EMTKLLGIKT (205 aa). Residues 162–169, 241–243, and 254–256 each bind substrate; these read RGGQVTFH, SVG, and GVA. Catalysis depends on Cys-272, which acts as the Acyl-thioester intermediate.

Belongs to the LipB family.

The protein resides in the mitochondrion. The enzyme catalyses octanoyl-[ACP] + L-lysyl-[protein] = N(6)-octanoyl-L-lysyl-[protein] + holo-[ACP] + H(+). Its pathway is protein modification; protein lipoylation via endogenous pathway; protein N(6)-(lipoyl)lysine from octanoyl-[acyl-carrier-protein]: step 1/2. Its function is as follows. Catalyzes the transfer of endogenously produced octanoic acid from octanoyl-acyl-carrier-protein onto the lipoyl domains of lipoate-dependent enzymes. Lipoyl-ACP can also act as a substrate although octanoyl-ACP is likely to be the physiological substrate. The protein is Octanoyltransferase, mitochondrial (LIP2) of Saccharomyces cerevisiae (strain ATCC 204508 / S288c) (Baker's yeast).